Here is a 783-residue protein sequence, read N- to C-terminus: Probable phosphoketolase (783 aa).

It belongs to the XFP family. The cofactor is thiamine diphosphate.

In Rhodopseudomonas palustris (strain TIE-1), this protein is Probable phosphoketolase.